Reading from the N-terminus, the 87-residue chain is Retinal rod rhodopsin-sensitive cGMP 3',5'-cyclic phosphodiesterase subunit gamma (87 aa).

N-acetylmethionine is present on M1. The tract at residues 16 to 54 (VVGGPVTPRKGPPKFKQRQTRQFKSKPPKKGVQGFGDDI) is disordered. The segment covering 26–44 (GPPKFKQRQTRQFKSKPPK) has biased composition (basic residues).

The protein belongs to the rod/cone cGMP-PDE gamma subunit family. Oligomer composed of two catalytic chains (alpha and beta), an inhibitory chain (gamma) and the delta chain.

It catalyses the reaction 3',5'-cyclic GMP + H2O = GMP + H(+). Its function is as follows. Participates in processes of transmission and amplification of the visual signal. cGMP-PDEs are the effector molecules in G-protein-mediated phototransduction in vertebrate rods and cones. The polypeptide is Retinal rod rhodopsin-sensitive cGMP 3',5'-cyclic phosphodiesterase subunit gamma (PDE6G) (Cavia porcellus (Guinea pig)).